The following is a 360-amino-acid chain: Phosphoserine aminotransferase (360 aa).

L-glutamate is bound at residue Arg-41. Residues Trp-101, Thr-152, Asp-172, and Gln-195 each contribute to the pyridoxal 5'-phosphate site. The residue at position 196 (Lys-196) is an N6-(pyridoxal phosphate)lysine. 237-238 serves as a coordination point for pyridoxal 5'-phosphate; that stretch reads NT.

This sequence belongs to the class-V pyridoxal-phosphate-dependent aminotransferase family. SerC subfamily. As to quaternary structure, homodimer. Requires pyridoxal 5'-phosphate as cofactor.

Its subcellular location is the cytoplasm. The enzyme catalyses O-phospho-L-serine + 2-oxoglutarate = 3-phosphooxypyruvate + L-glutamate. The catalysed reaction is 4-(phosphooxy)-L-threonine + 2-oxoglutarate = (R)-3-hydroxy-2-oxo-4-phosphooxybutanoate + L-glutamate. It participates in amino-acid biosynthesis; L-serine biosynthesis; L-serine from 3-phospho-D-glycerate: step 2/3. It functions in the pathway cofactor biosynthesis; pyridoxine 5'-phosphate biosynthesis; pyridoxine 5'-phosphate from D-erythrose 4-phosphate: step 3/5. Catalyzes the reversible conversion of 3-phosphohydroxypyruvate to phosphoserine and of 3-hydroxy-2-oxo-4-phosphonooxybutanoate to phosphohydroxythreonine. The sequence is that of Phosphoserine aminotransferase from Burkholderia ambifaria (strain MC40-6).